Here is a 3342-residue protein sequence, read N- to C-terminus: Large tegument protein deneddylase (3342 aa).

Residues 1 to 302 (MTDSTDSRQA…SRIYGTSDIV (302 aa)) form a deubiquitination activity region. The Peptidase C76 domain maps to 78-298 (VAVGIRNQFA…ISTVSRIYGT (221 aa)). Catalysis depends on residues C98, D232, and H234. Residues 472–554 (RRPLWTPQSS…SPTTSNRGED (83 aa)) form a disordered region. Positions 480-494 (SSSENISLDGSSSSL) are enriched in low complexity. Residues 514–526 (VTSTESSDVTENV) are compositionally biased toward polar residues. Positions 630–656 (LYVCMMDIFARLFNYIIENGARTTSDR) are interaction with inner tegument protein. 3 disordered regions span residues 2584–2603 (DGDA…TYAD), 2654–2987 (PQIG…SRKH), and 3196–3279 (PKHD…SSTS). Pro residues-rich tracts occupy residues 2701 to 2743 (TPAP…PKPK), 2751 to 2777 (KPSP…PKPK), 2785 to 2799 (KPTP…SKPK), 2823 to 2837 (KPSP…PKPK), and 2845 to 2897 (KPTP…PKPK). A compositionally biased stretch (polar residues) spans 2911-2947 (NSDSKTSPVPNPNTFSASKIPPTSSIAEETKPCQSNL). Residues 3264–3279 (HVSGSTDTTTDGSSTS) show a composition bias toward low complexity.

It belongs to the herpesviridae large tegument protein family. As to quaternary structure, interacts with host CUL1 and CUL4A; these interactions inhibit the E3 ligase activity of cullins. Interacts with inner tegument protein. Interacts with capsid vertex specific component CVC2. Interacts with the major capsid protein/MCP.

It is found in the virion tegument. It localises to the host cytoplasm. The protein resides in the host nucleus. It catalyses the reaction Thiol-dependent hydrolysis of ester, thioester, amide, peptide and isopeptide bonds formed by the C-terminal Gly of ubiquitin (a 76-residue protein attached to proteins as an intracellular targeting signal).. Functionally, large tegument protein that plays multiple roles in the viral cycle. During viral entry, remains associated with the capsid while most of the tegument is detached and participates in the capsid transport toward the host nucleus. Plays a role in the routing of the capsid at the nuclear pore complex and subsequent uncoating. Within the host nucleus, acts as a deneddylase and promotes the degradation of nuclear CRLs (cullin-RING ubiquitin ligases) and thereby stabilizes nuclear CRL substrates, while cytoplasmic CRLs remain unaffected. These modifications prevent host cell cycle S-phase progression and create a favorable environment allowing efficient viral genome replication. Participates later in the secondary envelopment of capsids. Indeed, plays a linker role for the association of the outer viral tegument to the capsids together with the inner tegument protein. This chain is Large tegument protein deneddylase (MDV049), found in Gallus gallus (Chicken).